Reading from the N-terminus, the 263-residue chain is Hydroxyethylthiazole kinase 1 (263 aa).

Methionine 42 lines the substrate pocket. The ATP site is built by lysine 118 and threonine 164. Residue glycine 191 participates in substrate binding.

It belongs to the Thz kinase family. The cofactor is Mg(2+).

It catalyses the reaction 5-(2-hydroxyethyl)-4-methylthiazole + ATP = 4-methyl-5-(2-phosphooxyethyl)-thiazole + ADP + H(+). It functions in the pathway cofactor biosynthesis; thiamine diphosphate biosynthesis; 4-methyl-5-(2-phosphoethyl)-thiazole from 5-(2-hydroxyethyl)-4-methylthiazole: step 1/1. In terms of biological role, catalyzes the phosphorylation of the hydroxyl group of 4-methyl-5-beta-hydroxyethylthiazole (THZ). This Clostridium botulinum (strain Kyoto / Type A2) protein is Hydroxyethylthiazole kinase 1.